Here is a 927-residue protein sequence, read N- to C-terminus: MVSVIDKLVFDFGGKTLVSLAPDNNTLCVANKNGLTKILKTNNPEEEPETLDSSKLVSSIKCYSNSHFLMTTMQGDALRYNIDSSQEELLARFALPLRDCCVIHSGKMAVFGGDDLELILLELDDETHKKHAIKIDEQVSQISYNSQMNILAVSMINGKVQIFSLTSTIPNKVHELNDYIVANSYDDTHRDKILSNMMDDIDKDNDNDLSETADPDENNVADPEFCAANRICTRVAWHPKGLHFALPCADDTVKIFSIKGYSLQKTLSTNLSSTKAHFIDLQFDPLRGTYIAAVDLNNKLTVWNWETSEIHYTREFKRKITNIAWKIQADSKTLDLVLGTWSGSIAIVQNLAESVVSNIPDQSVAESSTKHGLFVDSESDLENLEGNDDINKSDKLFSDITQEANAEDVFTQTHDGPSGLSEKRKYNFEDEEDFIDDDDGAGYISGKKPHNEHSYSRVHKTHSFPISLANTGKFRYMPFSPAGTPFGFTDRRYLTMNEVGYVSTVKNSEQYSITVSFFDVGRFREYHFEDLFGYDLCFLNEKGTLFGQSKTGQIQYRPHDSIHSNWTKIIPLQAGERITSVAATPVRVIVGTSLGYFRSFNQFGVPFAVEKTSPIVALTAQNYRVFSVHYSQFHGLSYSLSELGTSSKRYYKRECPLPMSLPNINSDMKKDANLDYYNFNPMGIKSLFFSSYGDPCIFGSDNTLLLLSKWRSPEESKWLPILDSNMEIWKMSGGKETTDIHVWPLALAYDTLNCILVKGKHIWPEFPLPLPSEMEIRMPVFVKSKLLEENKAILNKKNEIGADTEAEEGEEDKEIQIPVSMAAEEEYLRSKVLSELLTDTLENDGEMYGNENEVLAALNGAYDKALLRLFASACSDQNVEKALSLAHELKQDRALTAAVKISERAELPSLVKKINNIREARYEQQLK.

WD repeat units lie at residues 10–49 (FDFG…EEPE), 134–173 (KIDE…PNKV), 227–266 (AANR…LQKT), and 273–313 (STKA…IHYT). S377, S379, and S398 each carry phosphoserine. A phosphothreonine mark is found at T401 and T411. At S463 the chain carries Phosphoserine. The WD 5 repeat unit spans residues 699 to 739 (GSDNTLLLLSKWRSPEESKWLPILDSNMEIWKMSGGKETTD).

It localises to the nucleus. In terms of biological role, accessory factor for DNA replication. It plays a role in accurately duplicating the genome in vivo. This chain is DNA polymerase alpha-binding protein (CTF4), found in Saccharomyces cerevisiae (strain ATCC 204508 / S288c) (Baker's yeast).